The following is a 459-amino-acid chain: Cysteine--tRNA ligase (459 aa).

C28 contacts Zn(2+). The short motif at 30-40 (ITIYDYCHIGH) is the 'HIGH' region element. Zn(2+) contacts are provided by C209, H234, and E238. Positions 266–270 (KMSKS) match the 'KMSKS' region motif. Residue K269 coordinates ATP.

The protein belongs to the class-I aminoacyl-tRNA synthetase family. As to quaternary structure, monomer. It depends on Zn(2+) as a cofactor.

The protein localises to the cytoplasm. The catalysed reaction is tRNA(Cys) + L-cysteine + ATP = L-cysteinyl-tRNA(Cys) + AMP + diphosphate. The chain is Cysteine--tRNA ligase from Pseudoalteromonas translucida (strain TAC 125).